The following is a 420-amino-acid chain: Pyrin and HIN domain-containing protein 1 (420 aa).

In terms of domain architecture, Pyrin spans 1 to 87 (MVNEYKRIVL…ANKLKNEKAK (87 aa)). Disordered regions lie at residues 82–201 (KNEK…SSSA) and 216–236 (RLKNVPKEPSEENGHQQGSKK). Residues 87 to 102 (KAKRTRTGKRKTAAKR) show a composition bias toward basic residues. 2 stretches are compositionally biased toward polar residues: residues 108-118 (PSTSQPMSTTN) and 126-151 (GRSTPDTQVAQLSLPTASRRNQAIQI). Residues 152–169 (SPTIASSSGQTSSRSSET) show a composition bias toward low complexity. A compositionally biased stretch (polar residues) spans 170 to 201 (LQSIIQSPKTPKRPSSSILDPPVSSGTASSSA). The HIN-200 domain occupies 219–416 (NVPKEPSEEN…STTHSNMQVI (198 aa)). A compositionally biased stretch (basic and acidic residues) spans 220–229 (VPKEPSEENG).

It belongs to the HIN-200 family.

The protein resides in the nucleus. This is Pyrin and HIN domain-containing protein 1 from Mus musculus (Mouse).